The sequence spans 230 residues: Fibrillarin-like rRNA/tRNA 2'-O-methyltransferase (230 aa).

S-adenosyl-L-methionine is bound by residues 87 to 88, 105 to 106, 130 to 131, and 150 to 153; these read TT, EY, DA, and DVAQ.

In terms of assembly, interacts with nop5. Component of box C/D small ribonucleoprotein (sRNP) particles that contain rpl7ae, FlpA and nop5, plus a guide RNA.

Its function is as follows. Involved in pre-rRNA and tRNA processing. Utilizes the methyl donor S-adenosyl-L-methionine to catalyze the site-specific 2'-hydroxyl methylation of ribose moieties in rRNA and tRNA. Site specificity is provided by a guide RNA that base pairs with the substrate. Methylation occurs at a characteristic distance from the sequence involved in base pairing with the guide RNA. The protein is Fibrillarin-like rRNA/tRNA 2'-O-methyltransferase of Methanocaldococcus jannaschii (strain ATCC 43067 / DSM 2661 / JAL-1 / JCM 10045 / NBRC 100440) (Methanococcus jannaschii).